Here is a 432-residue protein sequence, read N- to C-terminus: Transcriptional adapter 3 (432 aa).

The stretch at 40–69 (IEELDTLQLELETLLSSASRRLRVLEAETQ) forms a coiled coil. Disordered stretches follow at residues 88-127 (KEHE…RNMQ) and 275-313 (SPVE…HTKS). Polar residues predominate over residues 293–305 (DGASTSPRSQNKP). A coiled-coil region spans residues 367–407 (LLRLAKEEMNRQELRQRVRMADNEVMDAFRKIMAARQKKRT).

It belongs to the NGG1 family.

The protein localises to the nucleus. Functionally, functions as a component of the PCAF complex. The PCAF complex is capable of efficiently acetylating histones in a nucleosomal context. The polypeptide is Transcriptional adapter 3 (tada3) (Xenopus tropicalis (Western clawed frog)).